A 76-amino-acid polypeptide reads, in one-letter code: Omega-agatoxin-Aa3b (76 aa).

6 disulfide bridges follow: C2/C19, C9/C25, C16/C52, C18/C40, C27/C38, and C59/C67.

Belongs to the neurotoxin 04 (omega-agtx) family. 03 (type II/III omega-agtx) subfamily. In terms of tissue distribution, expressed by the venom gland.

It localises to the secreted. Its function is as follows. Omega-agatoxins are antagonists of voltage-gated calcium channels. This toxin blocks calcium channels in insect central neurons but not at peripheral neuromuscular junctions. In vertebrates, it is broadly active against all high-threshold Cav1/CACNA1 channels and Cav2.2/CACNA1B channels. This Agelenopsis aperta (North American funnel-web spider) protein is Omega-agatoxin-Aa3b.